The sequence spans 157 residues: 2-C-methyl-D-erythritol 2,4-cyclodiphosphate synthase (157 aa).

Residues Asp-8 and His-10 each contribute to the a divalent metal cation site. 4-CDP-2-C-methyl-D-erythritol 2-phosphate-binding positions include 8–10 and 34–35; these read DVH and HS. Residue His-42 coordinates a divalent metal cation. 4-CDP-2-C-methyl-D-erythritol 2-phosphate-binding positions include 56–58, 61–65, 100–106, 132–135, Phe-139, and Arg-142; these read DIG, FPDTD, AQAPKMA, and TTTE.

Belongs to the IspF family. In terms of assembly, homotrimer. Requires a divalent metal cation as cofactor.

It catalyses the reaction 4-CDP-2-C-methyl-D-erythritol 2-phosphate = 2-C-methyl-D-erythritol 2,4-cyclic diphosphate + CMP. It participates in isoprenoid biosynthesis; isopentenyl diphosphate biosynthesis via DXP pathway; isopentenyl diphosphate from 1-deoxy-D-xylulose 5-phosphate: step 4/6. Its function is as follows. Involved in the biosynthesis of isopentenyl diphosphate (IPP) and dimethylallyl diphosphate (DMAPP), two major building blocks of isoprenoid compounds. Catalyzes the conversion of 4-diphosphocytidyl-2-C-methyl-D-erythritol 2-phosphate (CDP-ME2P) to 2-C-methyl-D-erythritol 2,4-cyclodiphosphate (ME-CPP) with a corresponding release of cytidine 5-monophosphate (CMP). This is 2-C-methyl-D-erythritol 2,4-cyclodiphosphate synthase from Edwardsiella ictaluri (strain 93-146).